A 76-amino-acid polypeptide reads, in one-letter code: UPF0235 protein MRA_1997 (76 aa).

The protein belongs to the UPF0235 family.

This is UPF0235 protein MRA_1997 from Mycobacterium tuberculosis (strain ATCC 25177 / H37Ra).